The primary structure comprises 129 residues: Small ribosomal subunit protein uS12 (129 aa).

At D89 the chain carries 3-methylthioaspartic acid. Residues 101–129 (SLDTSGVADRKQSRSKYGAKQPKAGAAKK) form a disordered region. Low complexity predominate over residues 116 to 129 (KYGAKQPKAGAAKK).

This sequence belongs to the universal ribosomal protein uS12 family. In terms of assembly, part of the 30S ribosomal subunit. Contacts proteins S8 and S17. May interact with IF1 in the 30S initiation complex.

With S4 and S5 plays an important role in translational accuracy. Functionally, interacts with and stabilizes bases of the 16S rRNA that are involved in tRNA selection in the A site and with the mRNA backbone. Located at the interface of the 30S and 50S subunits, it traverses the body of the 30S subunit contacting proteins on the other side and probably holding the rRNA structure together. The combined cluster of proteins S8, S12 and S17 appears to hold together the shoulder and platform of the 30S subunit. This chain is Small ribosomal subunit protein uS12, found in Chlorobaculum parvum (strain DSM 263 / NCIMB 8327) (Chlorobium vibrioforme subsp. thiosulfatophilum).